Here is a 442-residue protein sequence, read N- to C-terminus: Mirror-image polydactyly gene 1 protein (442 aa).

Residues 1 to 39 (MENWSKDITHSYLEQETTGINKSTQPDEQLTMNSEKSMH) form a disordered region. Positions 12 to 35 (YLEQETTGINKSTQPDEQLTMNSE) are enriched in polar residues. Coiled coils occupy residues 107-212 (SDKE…LENI) and 253-435 (ECKM…KVGT).

In terms of tissue distribution, expressed very weakly in heart, liver, skeletal muscle, kidney, pancreas and fetal kidney. Not detected in brain, placenta and lung.

The polypeptide is Mirror-image polydactyly gene 1 protein (MIPOL1) (Homo sapiens (Human)).